We begin with the raw amino-acid sequence, 457 residues long: Multidrug resistance protein MdtK (457 aa).

A run of 12 helical transmembrane segments spans residues 11 to 31 (LLAL…MGVV), 53 to 73 (IWLP…PIVA), 93 to 113 (WLAT…RFII), 127 to 147 (AIGF…YQVL), 160 to 180 (GMII…AFIY), 188 to 208 (LGGI…FLMM), 243 to 263 (LPVG…ALLV), 276 to 296 (IALN…IAAT), 316 to 336 (ITAL…SIIF), 357 to 377 (LMLF…GSGV), 387 to 407 (IFFI…YLLG), and 416 to 436 (MGPA…AIMM).

The protein belongs to the multi antimicrobial extrusion (MATE) (TC 2.A.66.1) family. MdtK subfamily.

The protein localises to the cell inner membrane. In terms of biological role, multidrug efflux pump that functions probably as a Na(+)/drug antiporter. The chain is Multidrug resistance protein MdtK from Proteus mirabilis (strain HI4320).